The following is a 544-amino-acid chain: Protein angel homolog 2 (544 aa).

Belongs to the CCR4/nocturin family.

The protein is Protein angel homolog 2 (Angel2) of Mus musculus (Mouse).